The primary structure comprises 35 residues: Sperm-specific protein Phi-1 (35 aa).

Basic residues-rich tracts occupy residues 1-17 (PSPTRRSKSRSKSRSRS) and 25-35 (AAKRAKSKTAK). The disordered stretch occupies residues 1-35 (PSPTRRSKSRSKSRSRSRSASAGKAAKRAKSKTAK).

As to expression, sperm.

The protein resides in the nucleus. It is found in the chromosome. In terms of biological role, involved in nuclear basic protein transition: histones are replaced by spermatid specific proteins which are themselves replaced by protamines in late spermatids. This Mytilus californianus (California mussel) protein is Sperm-specific protein Phi-1.